Reading from the N-terminus, the 134-residue chain is 6,7-dimethyl-8-ribityllumazine synthase (134 aa).

Residues Phe12, 44–46, and 68–70 each bind 5-amino-6-(D-ribitylamino)uracil; these read VFD and SVI. Residue 73-74 participates in (2S)-2-hydroxy-3-oxobutyl phosphate binding; the sequence is ET. His76 (proton donor) is an active-site residue. Leu101 contacts 5-amino-6-(D-ribitylamino)uracil. Arg116 is a (2S)-2-hydroxy-3-oxobutyl phosphate binding site.

Belongs to the DMRL synthase family.

It catalyses the reaction (2S)-2-hydroxy-3-oxobutyl phosphate + 5-amino-6-(D-ribitylamino)uracil = 6,7-dimethyl-8-(1-D-ribityl)lumazine + phosphate + 2 H2O + H(+). Its pathway is cofactor biosynthesis; riboflavin biosynthesis; riboflavin from 2-hydroxy-3-oxobutyl phosphate and 5-amino-6-(D-ribitylamino)uracil: step 1/2. Catalyzes the formation of 6,7-dimethyl-8-ribityllumazine by condensation of 5-amino-6-(D-ribitylamino)uracil with 3,4-dihydroxy-2-butanone 4-phosphate. This is the penultimate step in the biosynthesis of riboflavin. This Methanosarcina acetivorans (strain ATCC 35395 / DSM 2834 / JCM 12185 / C2A) protein is 6,7-dimethyl-8-ribityllumazine synthase.